Reading from the N-terminus, the 326-residue chain is L-Ala--D-Glu endopeptidase (326 aa).

The signal sequence occupies residues 1 to 19 (MKVLLSALLLLLFAFEPSA). Residues His204, Asp208, His292, and His294 each coordinate Zn(2+).

Belongs to the peptidase M23B family. Zn(2+) is required as a cofactor.

In terms of biological role, L-Ala--D-Glu endopeptidase involved in production of single L-alanine side chains from tetrapeptides in the spore cortex peptidoglycan. Therefore, is required for the endospore cortex maturation. The chain is L-Ala--D-Glu endopeptidase (lytH) from Bacillus subtilis (strain 168).